The chain runs to 285 residues: 4-diphosphocytidyl-2-C-methyl-D-erythritol kinase (285 aa).

Residue lysine 10 is part of the active site. ATP is bound at residue 94–104 (PVAAGLGGGSS). Residue aspartate 136 is part of the active site.

It belongs to the GHMP kinase family. IspE subfamily.

The enzyme catalyses 4-CDP-2-C-methyl-D-erythritol + ATP = 4-CDP-2-C-methyl-D-erythritol 2-phosphate + ADP + H(+). It participates in isoprenoid biosynthesis; isopentenyl diphosphate biosynthesis via DXP pathway; isopentenyl diphosphate from 1-deoxy-D-xylulose 5-phosphate: step 3/6. Its function is as follows. Catalyzes the phosphorylation of the position 2 hydroxy group of 4-diphosphocytidyl-2C-methyl-D-erythritol. This is 4-diphosphocytidyl-2-C-methyl-D-erythritol kinase from Latilactobacillus sakei subsp. sakei (strain 23K) (Lactobacillus sakei subsp. sakei).